The sequence spans 156 residues: CD-NTase/cGAS isopeptidase (156 aa).

One can recognise an MPN domain in the interval 9 to 147; the sequence is IDDFDNHVVI…WIGKKIKNDI (139 aa). Catalysis depends on Glu38, which acts as the Proton donor/acceptor. Positions 100, 102, and 113 each coordinate Zn(2+). Positions 100–113 match the JAMM motif motif; it reads HTHPEDFPHPSFID.

This sequence belongs to the peptidase M67B family. Cap3 isopeptidase subfamily.

Functionally, metalloprotease priming reversal component of a CBASS antivirus system. CBASS (cyclic oligonucleotide-based antiphage signaling system) provides immunity against bacteriophages. The CD-NTase protein (DncV) synthesizes cyclic nucleotides in response to infection; these serve as specific second messenger signals. The signals activate a diverse range of effectors, leading to bacterial cell death and thus abortive phage infection. A type II-A(GA) CBASS system. In terms of biological role, reverses the primed state of DncV, the CD-NTase, cleaving it from cellular proteins. Cleaves a Sumo-DncV-DncV fusion protein precisely between the 2 DncV moieties. Its function is as follows. Protects E.coli against phage infection. When capV and dncV are introduced in E.coli MG1655 there is 1000-fold protection against phage P1; protection against other phage (T4, T5 and T6) requires the 2 subsequent genes. In another paper the capV-dncV-cap2-cap3 operon gives 10(4)-10(5)-fold protection against phages lambda, T2, T4 and T6, about 1000-fold protection against P1 and 10-fold protection against T5. This Escherichia coli (strain TW11681) protein is CD-NTase/cGAS isopeptidase.